Reading from the N-terminus, the 178-residue chain is Large ribosomal subunit protein uL6 (178 aa).

It belongs to the universal ribosomal protein uL6 family. Part of the 50S ribosomal subunit.

Functionally, this protein binds to the 23S rRNA, and is important in its secondary structure. It is located near the subunit interface in the base of the L7/L12 stalk, and near the tRNA binding site of the peptidyltransferase center. The protein is Large ribosomal subunit protein uL6 of Staphylococcus carnosus (strain TM300).